The sequence spans 416 residues: Peptide chain release factor subunit 1 (416 aa).

This sequence belongs to the eukaryotic release factor 1 family. In terms of assembly, heterodimer of two subunits, one of which binds GTP.

Its subcellular location is the cytoplasm. In terms of biological role, directs the termination of nascent peptide synthesis (translation) in response to the termination codons UAA, UAG and UGA. This is Peptide chain release factor subunit 1 from Haloquadratum walsbyi (strain DSM 16790 / HBSQ001).